We begin with the raw amino-acid sequence, 385 residues long: UDP-N-acetylglucosamine--N-acetylmuramyl-(pentapeptide) pyrophosphoryl-undecaprenol N-acetylglucosamine transferase (385 aa).

UDP-N-acetyl-alpha-D-glucosamine is bound by residues 11–13 (TGG), asparagine 117, arginine 160, serine 215, and glutamine 317.

This sequence belongs to the glycosyltransferase 28 family. MurG subfamily.

It localises to the cell inner membrane. The enzyme catalyses di-trans,octa-cis-undecaprenyl diphospho-N-acetyl-alpha-D-muramoyl-L-alanyl-D-glutamyl-meso-2,6-diaminopimeloyl-D-alanyl-D-alanine + UDP-N-acetyl-alpha-D-glucosamine = di-trans,octa-cis-undecaprenyl diphospho-[N-acetyl-alpha-D-glucosaminyl-(1-&gt;4)]-N-acetyl-alpha-D-muramoyl-L-alanyl-D-glutamyl-meso-2,6-diaminopimeloyl-D-alanyl-D-alanine + UDP + H(+). The protein operates within cell wall biogenesis; peptidoglycan biosynthesis. Cell wall formation. Catalyzes the transfer of a GlcNAc subunit on undecaprenyl-pyrophosphoryl-MurNAc-pentapeptide (lipid intermediate I) to form undecaprenyl-pyrophosphoryl-MurNAc-(pentapeptide)GlcNAc (lipid intermediate II). The polypeptide is UDP-N-acetylglucosamine--N-acetylmuramyl-(pentapeptide) pyrophosphoryl-undecaprenol N-acetylglucosamine transferase (Rickettsia typhi (strain ATCC VR-144 / Wilmington)).